The chain runs to 63 residues: Large ribosomal subunit protein eL37 (63 aa).

Positions 20, 23, 35, and 38 each coordinate Zn(2+). Residues Cys20 to Cys38 form a C4-type zinc finger.

The protein belongs to the eukaryotic ribosomal protein eL37 family. In terms of assembly, part of the 50S ribosomal subunit. Zn(2+) is required as a cofactor.

Its function is as follows. Binds to the 23S rRNA. This chain is Large ribosomal subunit protein eL37, found in Thermococcus kodakarensis (strain ATCC BAA-918 / JCM 12380 / KOD1) (Pyrococcus kodakaraensis (strain KOD1)).